Reading from the N-terminus, the 230-residue chain is uncharacterized protein (230 aa).

A helical transmembrane segment spans residues 93 to 115 (VFLYYFLIVYTSGNVDLISRFLF).

This sequence belongs to the DUP/COS family.

Its subcellular location is the membrane. This is an uncharacterized protein from Saccharomyces cerevisiae (strain ATCC 204508 / S288c) (Baker's yeast).